We begin with the raw amino-acid sequence, 386 residues long: GTPase Obg (386 aa).

The Obg domain occupies 1–159 (MKFVDEASIL…RELLLELMLL (159 aa)). Residues 127–147 (NTRFKSSVNRTPRQKTNGTPG) are disordered. The span at 129 to 145 (RFKSSVNRTPRQKTNGT) shows a compositional bias: polar residues. In terms of domain architecture, OBG-type G spans 160–333 (ADVGMLGMPN…LCWDVMTFII (174 aa)). GTP contacts are provided by residues 166-173 (GMPNAGKS), 191-195 (FTTLV), 213-216 (DIPG), 283-286 (NKID), and 314-316 (SAA). Serine 173 and threonine 193 together coordinate Mg(2+).

The protein belongs to the TRAFAC class OBG-HflX-like GTPase superfamily. OBG GTPase family. As to quaternary structure, monomer. Mg(2+) is required as a cofactor.

It localises to the cytoplasm. In terms of biological role, an essential GTPase which binds GTP, GDP and possibly (p)ppGpp with moderate affinity, with high nucleotide exchange rates and a fairly low GTP hydrolysis rate. Plays a role in control of the cell cycle, stress response, ribosome biogenesis and in those bacteria that undergo differentiation, in morphogenesis control. This Escherichia coli (strain UTI89 / UPEC) protein is GTPase Obg.